Reading from the N-terminus, the 184-residue chain is MANQIYIISLIFLSVLLYQSTTVLSFRQPFNLAKPCKRFVFYLHNVAYDGDNTDNATSAAIVNPLGLGDFSFGKFVIMDNPVTMDQNMLSEQVARVQGFFFYHGKTKYDTWLSWSVVFNSTQHKGALNIMGENAFMEPTRDLPVVGGTGDFVMTRGIATFMTDLVEGSKYFRVKMDIKLYECYY.

Residues 1–25 form the signal peptide; it reads MANQIYIISLIFLSVLLYQSTTVLS. A disulfide bridge links Cys36 with Cys182. N-linked (GlcNAc...) asparagine glycosylation is found at Asn55 and Asn119.

Belongs to the plant dirigent protein family. As to quaternary structure, homodimer. Expressed in root vasculature and meristems, cotyledons, flowers, siliques, and leaf trichomes. Localized in the interfascicular/vascular cambia and developing xylem.

It localises to the secreted. The protein resides in the extracellular space. The protein localises to the apoplast. In terms of biological role, dirigent proteins impart stereoselectivity on the phenoxy radical-coupling reaction, yielding optically active lignans from two molecules of coniferyl alcohol in the biosynthesis of lignans, flavonolignans, and alkaloids and thus plays a central role in plant secondary metabolism. This Arabidopsis thaliana (Mouse-ear cress) protein is Dirigent protein 13 (DIR13).